The following is a 198-amino-acid chain: Ribose 1,5-bisphosphate phosphokinase PhnN (198 aa).

25–32 is an ATP binding site; that stretch reads GPSGAGKD.

It belongs to the ribose 1,5-bisphosphokinase family.

It carries out the reaction alpha-D-ribose 1,5-bisphosphate + ATP = 5-phospho-alpha-D-ribose 1-diphosphate + ADP. The protein operates within metabolic intermediate biosynthesis; 5-phospho-alpha-D-ribose 1-diphosphate biosynthesis; 5-phospho-alpha-D-ribose 1-diphosphate from D-ribose 5-phosphate (route II): step 3/3. Its function is as follows. Catalyzes the phosphorylation of ribose 1,5-bisphosphate to 5-phospho-D-ribosyl alpha-1-diphosphate (PRPP). This chain is Ribose 1,5-bisphosphate phosphokinase PhnN, found in Bradyrhizobium diazoefficiens (strain JCM 10833 / BCRC 13528 / IAM 13628 / NBRC 14792 / USDA 110).